We begin with the raw amino-acid sequence, 154 residues long: 6,7-dimethyl-8-ribityllumazine synthase (154 aa).

Residues Phe21, Ala55–Glu57, and Cys79–Ile81 contribute to the 5-amino-6-(D-ribitylamino)uracil site. (2S)-2-hydroxy-3-oxobutyl phosphate is bound at residue Ala84–Thr85. Residue His87 is the Proton donor of the active site. Phe112 contributes to the 5-amino-6-(D-ribitylamino)uracil binding site. Arg126 contributes to the (2S)-2-hydroxy-3-oxobutyl phosphate binding site.

This sequence belongs to the DMRL synthase family. As to quaternary structure, forms an icosahedral capsid composed of 60 subunits, arranged as a dodecamer of pentamers.

The catalysed reaction is (2S)-2-hydroxy-3-oxobutyl phosphate + 5-amino-6-(D-ribitylamino)uracil = 6,7-dimethyl-8-(1-D-ribityl)lumazine + phosphate + 2 H2O + H(+). It participates in cofactor biosynthesis; riboflavin biosynthesis; riboflavin from 2-hydroxy-3-oxobutyl phosphate and 5-amino-6-(D-ribitylamino)uracil: step 1/2. Its function is as follows. Catalyzes the formation of 6,7-dimethyl-8-ribityllumazine by condensation of 5-amino-6-(D-ribitylamino)uracil with 3,4-dihydroxy-2-butanone 4-phosphate. This is the penultimate step in the biosynthesis of riboflavin. This chain is 6,7-dimethyl-8-ribityllumazine synthase, found in Staphylococcus aureus (strain Mu50 / ATCC 700699).